The sequence spans 186 residues: Catechol O-methyltransferase (186 aa).

S-adenosyl-L-methionine-binding positions include V7, E29, S37, E55, L56, 82-85 (GASQ), S84, and D106. Position 106 (D106) interacts with Mg(2+). Position 109 (K109) interacts with substrate. The Mg(2+) site is built by D134 and N135. Residues N135 and E164 each contribute to the substrate site. Residue S182 is modified to Phosphoserine.

The protein belongs to the class I-like SAM-binding methyltransferase superfamily. Cation-dependent O-methyltransferase family. The cofactor is Mg(2+).

It localises to the cytoplasm. Its subcellular location is the cell membrane. The enzyme catalyses a catechol + S-adenosyl-L-methionine = a guaiacol + S-adenosyl-L-homocysteine + H(+). The catalysed reaction is 2-hydroxyestrone + S-adenosyl-L-methionine = 2-hydroxy-3-methoxy-estrone + S-adenosyl-L-homocysteine + H(+). It catalyses the reaction 4-hydroxyestrone + S-adenosyl-L-methionine = 4-methoxyestrone + S-adenosyl-L-homocysteine + H(+). It carries out the reaction 2-hydroxyestrone + S-adenosyl-L-methionine = 2-methoxyestrone + S-adenosyl-L-homocysteine + H(+). The enzyme catalyses 4-hydroxy-17beta-estradiol + S-adenosyl-L-methionine = 4-methoxy-17beta-estradiol + S-adenosyl-L-homocysteine + H(+). The catalysed reaction is 2-hydroxy-17beta-estradiol + S-adenosyl-L-methionine = 2-hydroxy-3-methoxy-17beta-estradiol + S-adenosyl-L-homocysteine + H(+). It catalyses the reaction 2-hydroxy-17beta-estradiol + S-adenosyl-L-methionine = 2-methoxy-17beta-estradiol + S-adenosyl-L-homocysteine + H(+). Functionally, catalyzes the O-methylation, and thereby the inactivation, of catecholamine neurotransmitters and catechol hormones. Also shortens the biological half-lives of certain neuroactive drugs, like L-DOPA, alpha-methyl DOPA and isoproterenol. The protein is Catechol O-methyltransferase (COMT) of Sus scrofa (Pig).